Here is a 49-residue protein sequence, read N- to C-terminus: Large ribosomal subunit protein eL40 (49 aa).

The protein belongs to the eukaryotic ribosomal protein eL40 family.

The chain is Large ribosomal subunit protein eL40 from Methanosarcina acetivorans (strain ATCC 35395 / DSM 2834 / JCM 12185 / C2A).